Reading from the N-terminus, the 408-residue chain is BTB/POZ and MATH domain-containing protein 3 (408 aa).

The MATH domain maps to 24–158 (NGSHQFTIQG…DDCLVINCTV (135 aa)). Positions 194–261 (CDIAFQVGDE…IYTDVLPNVH (68 aa)) constitute a BTB domain.

This sequence belongs to the Tdpoz family. As to quaternary structure, homodimer or heterodimer with BPM3 and BPM5. Interacts with CUL3A and CUL3B. Interacts with RAP2-4 and RAP2-13. Binds to MYB56 at the promoter of FLOWERING LOCUS T (FT). As to expression, ubiquitous.

The protein resides in the nucleus. The protein localises to the cytoplasm. The protein operates within protein modification; protein ubiquitination. Its function is as follows. May act as a substrate-specific adapter of an E3 ubiquitin-protein ligase complex (CUL3-RBX1-BTB) which mediates the ubiquitination and subsequent proteasomal degradation of target proteins. This Arabidopsis thaliana (Mouse-ear cress) protein is BTB/POZ and MATH domain-containing protein 3.